Here is a 416-residue protein sequence, read N- to C-terminus: Calreticulin (416 aa).

The first 17 residues, Met1–Ala17, serve as a signal peptide directing secretion. Positions Asp18–Glu197 are N-domain. Gln26 is a binding site for Ca(2+). Lys48 is modified (N6-acetyllysine). Ca(2+)-binding residues include Lys62 and Lys64. Position 64 is an N6-(2-hydroxyisobutyryl)lysine (Lys64). Residues Cys105 and Cys137 are joined by a disulfide bond. Tyr109, Lys111, Tyr128, and Asp135 together coordinate an alpha-D-glucoside. Lys159 carries the post-translational modification N6-acetyllysine. Residues Val191–Phe202 form a 1-1 repeat. The tract at residues Val191 to Glu255 is 4 X approximate repeats. Residues Ser193–Pro277 are disordered. Residues Asp198 to Tyr308 form a P-domain region. Residues Lys207–Glu251 are compositionally biased toward basic and acidic residues. Lys209 bears the N6-acetyllysine mark. 6 repeat units span residues Asp210–Glu221, Asp227–Lys238, Asp244–Glu255, Gly259–Pro269, Gly273–Pro283, and Gly287–Pro297. An interaction with PPIB region spans residues Asp237 to Glu270. Positions Asp252 to Trp261 are enriched in acidic residues. The interval Gly259–Pro297 is 3 X approximate repeats. The tract at residues Asp309–Leu416 is C-domain. Asp317 serves as a coordination point for an alpha-D-glucoside. Asp328 serves as a coordination point for Ca(2+). Residues Thr350–Leu416 are disordered. Residues Ala352 to Glu379 are compositionally biased toward basic and acidic residues. Positions Glu380–Ser408 are enriched in acidic residues. A Prevents secretion from ER motif is present at residues Lys413–Leu416.

It belongs to the calreticulin family. Monomer. Interacts with GABARAP, NR3C1, PDIA3/ERp57 and TRIM21. Interacts (via P-domain) with PDIA5. Interacts with PPIB. Interacts with SPACA9. Component of an EIF2 complex at least composed of CELF1/CUGBP1, CALR, CALR3, EIF2S1, EIF2S2, HSP90B1 and HSPA5. Interacts with CLCC1.

The protein resides in the endoplasmic reticulum lumen. The protein localises to the cytoplasm. It localises to the cytosol. Its subcellular location is the cytolytic granule. It is found in the secreted. The protein resides in the extracellular space. The protein localises to the extracellular matrix. It localises to the cell surface. Its subcellular location is the sarcoplasmic reticulum lumen. It is found in the cytoplasmic vesicle. The protein resides in the secretory vesicle. The protein localises to the cortical granule. Its function is as follows. Calcium-binding chaperone that promotes folding, oligomeric assembly and quality control in the endoplasmic reticulum (ER) via the calreticulin/calnexin cycle. This lectin interacts transiently with almost all of the monoglucosylated glycoproteins that are synthesized in the ER. Interacts with the DNA-binding domain of NR3C1 and mediates its nuclear export. Involved in maternal gene expression regulation. May participate in oocyte maturation via the regulation of calcium homeostasis. Present in the cortical granules of non-activated oocytes, is exocytosed during the cortical reaction in response to oocyte activation and might participate in the block to polyspermy. In Mus musculus (Mouse), this protein is Calreticulin (Calr).